Reading from the N-terminus, the 274-residue chain is 2-dehydro-3-deoxyphosphooctonate aldolase (274 aa).

The protein belongs to the KdsA family.

It is found in the cytoplasm. The catalysed reaction is D-arabinose 5-phosphate + phosphoenolpyruvate + H2O = 3-deoxy-alpha-D-manno-2-octulosonate-8-phosphate + phosphate. It functions in the pathway carbohydrate biosynthesis; 3-deoxy-D-manno-octulosonate biosynthesis; 3-deoxy-D-manno-octulosonate from D-ribulose 5-phosphate: step 2/3. The protein operates within bacterial outer membrane biogenesis; lipopolysaccharide biosynthesis. This chain is 2-dehydro-3-deoxyphosphooctonate aldolase, found in Rickettsia canadensis (strain McKiel).